An 82-amino-acid polypeptide reads, in one-letter code: uncharacterized protein (82 aa).

The tract at residues Leu-22–Gly-82 is disordered. A compositionally biased stretch (basic and acidic residues) spans His-47–Glu-58. Residues Trp-73–Gly-82 show a composition bias toward pro residues.

This is an uncharacterized protein from Homo sapiens (Human).